A 170-amino-acid chain; its full sequence is Fimbrial protein (170 aa).

Positions 1-7 (MNTLQKG) are excised as a propeptide. Residue Phe-8 is modified to N-methylphenylalanine. Residues 8 to 28 (FTLIELMIVIAIVGILAAVAL) traverse the membrane as a helical segment. O-linked (Gal...) serine glycosylation occurs at Ser-70. Ser-100 bears the O-(sn-1-glycerophosphoryl)serine mark. Residues Cys-127 and Cys-163 are joined by a disulfide bond.

This sequence belongs to the N-Me-Phe pilin family. In terms of assembly, the pili are polar flexible filaments of about 5.4 nanometers diameter and 2.5 micrometers average length; they consist of only a single polypeptide chain arranged in a helical configuration of five subunits per turn in the assembled pilus. In terms of processing, O-linked glycan consists of GlcNAc-Gal disaccharide.

Its subcellular location is the fimbrium. The protein resides in the membrane. In terms of biological role, major component of the type IV pilus (T4P) that plays a role in cellular adherence, microcolony formation as well as twitching motility. The chain is Fimbrial protein (pilE) from Neisseria meningitidis serogroup A / serotype 4A (strain DSM 15465 / Z2491).